A 215-amino-acid chain; its full sequence is Putative O-methyltransferase MAB_1361c (215 aa).

Residues Val-42, Glu-64, Gly-66–Thr-67, Ser-72, Asp-90, and Val-91 contribute to the S-adenosyl-L-methionine site. Asp-138 contacts substrate.

Belongs to the class I-like SAM-binding methyltransferase superfamily. Cation-dependent O-methyltransferase family.

This Mycobacteroides abscessus (strain ATCC 19977 / DSM 44196 / CCUG 20993 / CIP 104536 / JCM 13569 / NCTC 13031 / TMC 1543 / L948) (Mycobacterium abscessus) protein is Putative O-methyltransferase MAB_1361c.